The sequence spans 241 residues: tRNA (guanine-N(7)-)-methyltransferase (241 aa).

Residues 1 to 10 (MTESNETPNT) are compositionally biased toward polar residues. The disordered stretch occupies residues 1-21 (MTESNETPNTPEAGDESKHRR). Residues Glu71, Glu96, Asp123, and Asp146 each coordinate S-adenosyl-L-methionine. Asp146 is a catalytic residue. Substrate-binding positions include Lys150, Asp182, and 219–222 (TKFE).

This sequence belongs to the class I-like SAM-binding methyltransferase superfamily. TrmB family.

The catalysed reaction is guanosine(46) in tRNA + S-adenosyl-L-methionine = N(7)-methylguanosine(46) in tRNA + S-adenosyl-L-homocysteine. It participates in tRNA modification; N(7)-methylguanine-tRNA biosynthesis. Functionally, catalyzes the formation of N(7)-methylguanine at position 46 (m7G46) in tRNA. The protein is tRNA (guanine-N(7)-)-methyltransferase of Pseudomonas fluorescens (strain SBW25).